A 129-amino-acid polypeptide reads, in one-letter code: Fluoride-specific ion channel FluC (129 aa).

Transmembrane regions (helical) follow at residues 4–24 (LFVA…SGLI), 32–52 (FPWG…AFAT), 69–89 (FFMV…LQTL), and 105–125 (VLSV…AVLI). Na(+)-binding residues include Gly76 and Thr79.

The protein belongs to the fluoride channel Fluc/FEX (TC 1.A.43) family.

It is found in the cell inner membrane. It carries out the reaction fluoride(in) = fluoride(out). Na(+) is not transported, but it plays an essential structural role and its presence is essential for fluoride channel function. Its function is as follows. Fluoride-specific ion channel. Important for reducing fluoride concentration in the cell, thus reducing its toxicity. This Rhodospirillum rubrum (strain ATCC 11170 / ATH 1.1.1 / DSM 467 / LMG 4362 / NCIMB 8255 / S1) protein is Fluoride-specific ion channel FluC.